Reading from the N-terminus, the 549-residue chain is Cation/acetate symporter ActP (549 aa).

The Periplasmic segment spans residues methionine 1–asparagine 32. Residues tryptophan 33–lysine 55 traverse the membrane as a helical segment. At arginine 56–asparagine 75 the chain is on the cytoplasmic side. A helical membrane pass occupies residues glycine 76–threonine 98. Topologically, residues serine 99 to aspartate 102 are periplasmic. Residues glycine 103–leucine 125 traverse the membrane as a helical segment. Residues arginine 126 to proline 145 lie on the Cytoplasmic side of the membrane. The helical transmembrane segment at isoleucine 146–glycine 168 threads the bilayer. The Periplasmic portion of the chain corresponds to alanine 169–histidine 182. A helical membrane pass occupies residues isoleucine 183–threonine 205. The Cytoplasmic portion of the chain corresponds to tryptophan 206–lysine 211. The chain crosses the membrane as a helical span at residues alanine 212 to phenylalanine 234. Topologically, residues asparagine 235–serine 263 are periplasmic. A helical membrane pass occupies residues alanine 264 to phenylalanine 286. The Cytoplasmic portion of the chain corresponds to threonine 287–serine 297. The helical transmembrane segment at valine 298 to isoleucine 320 threads the bilayer. Residues methionine 321–glycine 358 are Periplasmic-facing. A helical transmembrane segment spans residues phenylalanine 359–serine 381. The Cytoplasmic segment spans residues alanine 382–glutamate 401. A helical transmembrane segment spans residues leucine 402–glutamate 424. Topologically, residues asparagine 425–asparagine 427 are periplasmic. The chain crosses the membrane as a helical span at residues isoleucine 428–serine 450. The Cytoplasmic segment spans residues methionine 451–alanine 461. Residues methionine 462–valine 484 form a helical membrane-spanning segment. The Periplasmic segment spans residues glutamine 485–isoleucine 493. Residues phenylalanine 494–alanine 516 form a helical membrane-spanning segment. The Cytoplasmic portion of the chain corresponds to threonine 517 to histidine 549.

Belongs to the sodium:solute symporter (SSF) (TC 2.A.21) family.

It localises to the cell inner membrane. Transports acetate. This is Cation/acetate symporter ActP (actP) from Escherichia coli O6:H1 (strain CFT073 / ATCC 700928 / UPEC).